We begin with the raw amino-acid sequence, 609 residues long: Replication factor A protein 1 (609 aa).

Residues 130 to 152 (QNEQNNASAPRTGISTSTNSFYG) show a composition bias toward polar residues. The tract at residues 130–166 (QNEQNNASAPRTGISTSTNSFYGNNAAATAPAPPPMM) is disordered. A DNA-binding region (OB) is located at residues 192-278 (WTIRARVTNK…NEYELMFERD (87 aa)). A C4-type zinc finger spans residues 477–498 (CPAADCNKKVFDQGGSWRCEKC).

This sequence belongs to the replication factor A protein 1 family. In terms of assembly, component of the heterotrimeric canonical replication protein A complex (RPA).

The protein localises to the nucleus. Functionally, as part of the replication protein A (RPA/RP-A), a single-stranded DNA-binding heterotrimeric complex, may play an essential role in DNA replication, recombination and repair. Binds and stabilizes single-stranded DNA intermediates, preventing complementary DNA reannealing and recruiting different proteins involved in DNA metabolism. The sequence is that of Replication factor A protein 1 (ssb1) from Schizosaccharomyces pombe (strain 972 / ATCC 24843) (Fission yeast).